We begin with the raw amino-acid sequence, 205 residues long: Small ribosomal subunit protein uS4 (205 aa).

One can recognise an S4 RNA-binding domain in the interval 95–156 (SRLDNIVYRM…KTIKIPIVKA (62 aa)).

Belongs to the universal ribosomal protein uS4 family. Part of the 30S ribosomal subunit. Contacts protein S5. The interaction surface between S4 and S5 is involved in control of translational fidelity.

One of the primary rRNA binding proteins, it binds directly to 16S rRNA where it nucleates assembly of the body of the 30S subunit. Functionally, with S5 and S12 plays an important role in translational accuracy. The sequence is that of Small ribosomal subunit protein uS4 from Mycoplasma pneumoniae (strain ATCC 29342 / M129 / Subtype 1) (Mycoplasmoides pneumoniae).